The chain runs to 295 residues: Histamine N-methyltransferase (295 aa).

E28 contributes to the substrate binding site. Positions 60, 89, 94, 120, and 143 each coordinate S-adenosyl-L-methionine. N284 is a substrate binding site.

This sequence belongs to the class I-like SAM-binding methyltransferase superfamily. HNMT family. In terms of assembly, monomer.

Its subcellular location is the cytoplasm. It carries out the reaction histamine + S-adenosyl-L-methionine = N(tau)-methylhistamine + S-adenosyl-L-homocysteine + H(+). Functionally, inactivates histamine by N-methylation. Plays an important role in degrading histamine and in regulating the airway response to histamine. The sequence is that of Histamine N-methyltransferase (Hnmt) from Mus musculus (Mouse).